A 279-amino-acid chain; its full sequence is Dermonecrotic toxin LspiSicTox-betaIE3i (279 aa).

His-5 is an active-site residue. 2 residues coordinate Mg(2+): Glu-25 and Asp-27. His-41 (nucleophile) is an active-site residue. 2 disulfide bridges follow: Cys-45–Cys-51 and Cys-47–Cys-190. Mg(2+) is bound at residue Asp-85.

It belongs to the arthropod phospholipase D family. Class II subfamily. Mg(2+) is required as a cofactor. As to expression, expressed by the venom gland.

It is found in the secreted. The catalysed reaction is an N-(acyl)-sphingosylphosphocholine = an N-(acyl)-sphingosyl-1,3-cyclic phosphate + choline. It catalyses the reaction an N-(acyl)-sphingosylphosphoethanolamine = an N-(acyl)-sphingosyl-1,3-cyclic phosphate + ethanolamine. The enzyme catalyses a 1-acyl-sn-glycero-3-phosphocholine = a 1-acyl-sn-glycero-2,3-cyclic phosphate + choline. It carries out the reaction a 1-acyl-sn-glycero-3-phosphoethanolamine = a 1-acyl-sn-glycero-2,3-cyclic phosphate + ethanolamine. Its function is as follows. Dermonecrotic toxins cleave the phosphodiester linkage between the phosphate and headgroup of certain phospholipids (sphingolipid and lysolipid substrates), forming an alcohol (often choline) and a cyclic phosphate. This toxin acts on sphingomyelin (SM). It may also act on ceramide phosphoethanolamine (CPE), lysophosphatidylcholine (LPC) and lysophosphatidylethanolamine (LPE), but not on lysophosphatidylserine (LPS), and lysophosphatidylglycerol (LPG). It acts by transphosphatidylation, releasing exclusively cyclic phosphate products as second products. Induces dermonecrosis, hemolysis, increased vascular permeability, edema, inflammatory response, and platelet aggregation. This chain is Dermonecrotic toxin LspiSicTox-betaIE3i, found in Loxosceles spinulosa (Recluse spider).